Here is a 475-residue protein sequence, read N- to C-terminus: Sulfate adenylyltransferase subunit 1 (475 aa).

Residues 25 to 239 (KSLLRFLTCG…EVLETVEIQR (215 aa)) form the tr-type G domain. The segment at 34-41 (GSVDDGKS) is G1. 34–41 (GSVDDGKS) is a binding site for GTP. The interval 92–96 (GITID) is G2. The tract at residues 113-116 (DTPG) is G3. Residues 113–117 (DTPGH) and 168–171 (NKMD) each bind GTP. Positions 168-171 (NKMD) are G4. A G5 region spans residues 206–208 (SAL).

This sequence belongs to the TRAFAC class translation factor GTPase superfamily. Classic translation factor GTPase family. CysN/NodQ subfamily. As to quaternary structure, heterodimer composed of CysD, the smaller subunit, and CysN.

The catalysed reaction is sulfate + ATP + H(+) = adenosine 5'-phosphosulfate + diphosphate. The protein operates within sulfur metabolism; hydrogen sulfide biosynthesis; sulfite from sulfate: step 1/3. Functionally, with CysD forms the ATP sulfurylase (ATPS) that catalyzes the adenylation of sulfate producing adenosine 5'-phosphosulfate (APS) and diphosphate, the first enzymatic step in sulfur assimilation pathway. APS synthesis involves the formation of a high-energy phosphoric-sulfuric acid anhydride bond driven by GTP hydrolysis by CysN coupled to ATP hydrolysis by CysD. This Escherichia coli O139:H28 (strain E24377A / ETEC) protein is Sulfate adenylyltransferase subunit 1.